The primary structure comprises 254 residues: Keratin-associated protein 24-1 (254 aa).

A run of 6 repeats spans residues 193 to 202 (YISNSCQPQS), 203 to 212 (YLVRNYHYSS), 213 to 222 (YRPTSCRPLS), 223 to 232 (YLSRSFRSLS), 233 to 242 (YIPSTFPPLR), and 243 to 252 (YLCSGSRPLK). The segment at 193-252 (YISNSCQPQSYLVRNYHYSSYRPTSCRPLSYLSRSFRSLSYIPSTFPPLRYLCSGSRPLK) is 6 X 10 AA repeats of Y-[ILR]-[SVPC]-[NRTS]-[SNTG]-X-[QHRP]-[PSY]-[QSL]-[SRK].

This sequence belongs to the PMG family. Interacts with hair keratins. In terms of tissue distribution, specific expression in the middle/upper hair cuticle.

Functionally, in the hair cortex, hair keratin intermediate filaments are embedded in an interfilamentous matrix, consisting of hair keratin-associated proteins (KRTAP), which are essential for the formation of a rigid and resistant hair shaft through their extensive disulfide bond cross-linking with abundant cysteine residues of hair keratins. The matrix proteins include the high-sulfur and high-glycine-tyrosine keratins. In Homo sapiens (Human), this protein is Keratin-associated protein 24-1 (KRTAP24-1).